The sequence spans 212 residues: Ribonuclease HII (212 aa).

The RNase H type-2 domain occupies threonine 20 to serine 209. Aspartate 26, glutamate 27, and aspartate 117 together coordinate a divalent metal cation.

This sequence belongs to the RNase HII family. Requires Mn(2+) as cofactor. Mg(2+) serves as cofactor.

Its subcellular location is the cytoplasm. The catalysed reaction is Endonucleolytic cleavage to 5'-phosphomonoester.. Functionally, endonuclease that specifically degrades the RNA of RNA-DNA hybrids. The polypeptide is Ribonuclease HII (Cereibacter sphaeroides (strain ATCC 17029 / ATH 2.4.9) (Rhodobacter sphaeroides)).